The chain runs to 661 residues: UvrABC system protein B (661 aa).

A Helicase ATP-binding domain is found at 25 to 182; that stretch reads AGLNSKKRSQ…SDLVNLQYER (158 aa). 38–45 provides a ligand contact to ATP; the sequence is GITGSGKT. The Beta-hairpin motif lies at 91–114; it reads YYDYYQPEAYIARTDTFIEKDSSI. Positions 430–592 constitute a Helicase C-terminal domain; the sequence is QVEDLISEIQ…IIPQTINRTI (163 aa). One can recognise a UVR domain in the interval 621-656; that stretch reads KAHIYKLKKAMLKAASNLEFEQATKLRDQLKNLEEA.

This sequence belongs to the UvrB family. In terms of assembly, forms a heterotetramer with UvrA during the search for lesions. Interacts with UvrC in an incision complex.

Its subcellular location is the cytoplasm. In terms of biological role, the UvrABC repair system catalyzes the recognition and processing of DNA lesions. A damage recognition complex composed of 2 UvrA and 2 UvrB subunits scans DNA for abnormalities. Upon binding of the UvrA(2)B(2) complex to a putative damaged site, the DNA wraps around one UvrB monomer. DNA wrap is dependent on ATP binding by UvrB and probably causes local melting of the DNA helix, facilitating insertion of UvrB beta-hairpin between the DNA strands. Then UvrB probes one DNA strand for the presence of a lesion. If a lesion is found the UvrA subunits dissociate and the UvrB-DNA preincision complex is formed. This complex is subsequently bound by UvrC and the second UvrB is released. If no lesion is found, the DNA wraps around the other UvrB subunit that will check the other stand for damage. The sequence is that of UvrABC system protein B from Rickettsia canadensis (strain McKiel).